Reading from the N-terminus, the 101-residue chain is Protein RnfH (101 aa).

Belongs to the UPF0125 (RnfH) family.

In Pseudomonas aeruginosa (strain LESB58), this protein is Protein RnfH.